Here is a 133-residue protein sequence, read N- to C-terminus: Capsid protein (133 aa).

It belongs to the Leviviricetes capsid protein family. In terms of assembly, homodimer. The capsid protein dimer binds to the viral RNA via an operator hairpin, but also many other RNA sequences in the viral genome.

The protein resides in the virion. Capsid protein self-assembles to form an icosahedral capsid with a T=3 symmetry, about 26 nm in diameter, and consisting of 89 capsid proteins dimers (178 capsid proteins). Involved in viral genome encapsidation through the interaction between a capsid protein dimer and the multiple packaging signals present in the RNA genome. Binding of the capsid proteins to the viral RNA induces a conformational change required for efficient T=3 shell formation. The capsid also contains 1 copy of the A2 maturation protein. Its function is as follows. Acts as a translational repressor of viral replicase synthesis late in infection. This latter function is the result of capsid protein interaction with an RNA hairpin which contains the replicase ribosome-binding site. In Escherichia coli, this protein is Capsid protein.